The following is a 145-amino-acid chain: Large ribosomal subunit protein bL9 (145 aa).

This sequence belongs to the bacterial ribosomal protein bL9 family.

Its function is as follows. Binds to the 23S rRNA. The chain is Large ribosomal subunit protein bL9 from Mesomycoplasma hyopneumoniae (strain 7448) (Mycoplasma hyopneumoniae).